The following is a 104-amino-acid chain: Small ribosomal subunit protein bS18 (104 aa).

Over residues 1–14 (MMNNEHDNFQKEVE) the composition is skewed to basic and acidic residues. A disordered region spans residues 1–25 (MMNNEHDNFQKEVETTTETTFNREE).

It belongs to the bacterial ribosomal protein bS18 family. Part of the 30S ribosomal subunit. Forms a tight heterodimer with protein bS6.

Its function is as follows. Binds as a heterodimer with protein bS6 to the central domain of the 16S rRNA, where it helps stabilize the platform of the 30S subunit. The sequence is that of Small ribosomal subunit protein bS18 from Mycoplasma pneumoniae (strain ATCC 29342 / M129 / Subtype 1) (Mycoplasmoides pneumoniae).